A 352-amino-acid polypeptide reads, in one-letter code: Photosystem II D2 protein 2 (352 aa).

A helical membrane pass occupies residues 40–60; it reads CAYLALGGWLTGTSFVTSWYT. Histidine 117 serves as a coordination point for chlorophyll a. A helical transmembrane segment spans residues 124–140; that stretch reads GFMLRQFEIARLVGVRP. Glutamine 129 and asparagine 142 together coordinate pheophytin a. The chain crosses the membrane as a helical span at residues 152 to 165; the sequence is VFVSVFLMYPLGQS. Histidine 197 contributes to the chlorophyll a binding site. The helical transmembrane segment at 207–227 threads the bilayer; it reads GALLCAIHGATVENTLFEDSE. A plastoquinone contacts are provided by histidine 214 and phenylalanine 261. Histidine 214 provides a ligand contact to Fe cation. Histidine 268 serves as a coordination point for Fe cation. A helical membrane pass occupies residues 278–294; the sequence is GLWMSSIGIVGLALNLR.

The protein belongs to the reaction center PufL/M/PsbA/D family. As to quaternary structure, PSII is composed of 1 copy each of membrane proteins PsbA, PsbB, PsbC, PsbD, PsbE, PsbF, PsbH, PsbI, PsbJ, PsbK, PsbL, PsbM, PsbT, PsbX, PsbY, PsbZ, Psb30/Ycf12, peripheral proteins PsbO, CyanoQ (PsbQ), PsbU, PsbV and a large number of cofactors. It forms dimeric complexes. The cofactor is The D1/D2 heterodimer binds P680, chlorophylls that are the primary electron donor of PSII, and subsequent electron acceptors. It shares a non-heme iron and each subunit binds pheophytin, quinone, additional chlorophylls, carotenoids and lipids. There is also a Cl(-1) ion associated with D1 and D2, which is required for oxygen evolution. The PSII complex binds additional chlorophylls, carotenoids and specific lipids..

The protein resides in the cellular thylakoid membrane. The enzyme catalyses 2 a plastoquinone + 4 hnu + 2 H2O = 2 a plastoquinol + O2. In terms of biological role, photosystem II (PSII) is a light-driven water:plastoquinone oxidoreductase that uses light energy to abstract electrons from H(2)O, generating O(2) and a proton gradient subsequently used for ATP formation. It consists of a core antenna complex that captures photons, and an electron transfer chain that converts photonic excitation into a charge separation. The D1/D2 (PsbA/PsbD) reaction center heterodimer binds P680, the primary electron donor of PSII as well as several subsequent electron acceptors. D2 is needed for assembly of a stable PSII complex. The sequence is that of Photosystem II D2 protein 2 from Synechococcus sp. (strain ATCC 27144 / PCC 6301 / SAUG 1402/1) (Anacystis nidulans).